The chain runs to 236 residues: Small ribosomal subunit protein uS3 (236 aa).

In terms of domain architecture, KH type-2 spans valine 39 to lysine 107.

This sequence belongs to the universal ribosomal protein uS3 family. As to quaternary structure, part of the 30S ribosomal subunit. Forms a tight complex with proteins S10 and S14.

Binds the lower part of the 30S subunit head. Binds mRNA in the 70S ribosome, positioning it for translation. In Wigglesworthia glossinidia brevipalpis, this protein is Small ribosomal subunit protein uS3.